A 259-amino-acid chain; its full sequence is Thiazole synthase (259 aa).

Lysine 100 serves as the catalytic Schiff-base intermediate with DXP. 1-deoxy-D-xylulose 5-phosphate contacts are provided by residues glycine 161, 187–188, and 209–210; these read AG and NT.

This sequence belongs to the ThiG family. As to quaternary structure, homotetramer. Forms heterodimers with either ThiH or ThiS.

It is found in the cytoplasm. The enzyme catalyses [ThiS sulfur-carrier protein]-C-terminal-Gly-aminoethanethioate + 2-iminoacetate + 1-deoxy-D-xylulose 5-phosphate = [ThiS sulfur-carrier protein]-C-terminal Gly-Gly + 2-[(2R,5Z)-2-carboxy-4-methylthiazol-5(2H)-ylidene]ethyl phosphate + 2 H2O + H(+). The protein operates within cofactor biosynthesis; thiamine diphosphate biosynthesis. Functionally, catalyzes the rearrangement of 1-deoxy-D-xylulose 5-phosphate (DXP) to produce the thiazole phosphate moiety of thiamine. Sulfur is provided by the thiocarboxylate moiety of the carrier protein ThiS. In vitro, sulfur can be provided by H(2)S. The polypeptide is Thiazole synthase (Halalkalibacterium halodurans (strain ATCC BAA-125 / DSM 18197 / FERM 7344 / JCM 9153 / C-125) (Bacillus halodurans)).